A 22-amino-acid polypeptide reads, in one-letter code: Antimicrobial peptide 4 (22 aa).

In terms of tissue distribution, expressed by the skin glands.

It is found in the secreted. In terms of biological role, has very strong antimicrobial activity against Gram-positive bacterium S.aureus and yeast C.albicans, and very weak activity against Gram-negative bacterium E.coli. Has strong hemolytic activity against human red blood cells. This chain is Antimicrobial peptide 4, found in Xenopus tropicalis (Western clawed frog).